A 136-amino-acid polypeptide reads, in one-letter code: Large ribosomal subunit protein uL16c (136 aa).

The tract at residues 1–20 (MLSPKRTRFRKQHRGRMKGK) is disordered.

Belongs to the universal ribosomal protein uL16 family. As to quaternary structure, part of the 50S ribosomal subunit.

Its subcellular location is the plastid. The protein resides in the chloroplast. The chain is Large ribosomal subunit protein uL16c from Lolium perenne (Perennial ryegrass).